The primary structure comprises 69 residues: Large ribosomal subunit protein bL31 (69 aa).

Zn(2+)-binding residues include Cys-16, Cys-18, Cys-37, and Cys-40.

This sequence belongs to the bacterial ribosomal protein bL31 family. Type A subfamily. In terms of assembly, part of the 50S ribosomal subunit. It depends on Zn(2+) as a cofactor.

Functionally, binds the 23S rRNA. The protein is Large ribosomal subunit protein bL31 of Buchnera aphidicola subsp. Cinara cedri (strain Cc).